The sequence spans 117 residues: Ribosome-binding factor A (117 aa).

This sequence belongs to the RbfA family. As to quaternary structure, monomer. Binds 30S ribosomal subunits, but not 50S ribosomal subunits or 70S ribosomes.

It is found in the cytoplasm. One of several proteins that assist in the late maturation steps of the functional core of the 30S ribosomal subunit. Associates with free 30S ribosomal subunits (but not with 30S subunits that are part of 70S ribosomes or polysomes). Required for efficient processing of 16S rRNA. May interact with the 5'-terminal helix region of 16S rRNA. The protein is Ribosome-binding factor A of Nitrosomonas eutropha (strain DSM 101675 / C91 / Nm57).